The chain runs to 477 residues: 3-isopropylmalate dehydratase large subunit (477 aa).

The [4Fe-4S] cluster site is built by cysteine 352, cysteine 413, and cysteine 416.

This sequence belongs to the aconitase/IPM isomerase family. LeuC type 1 subfamily. In terms of assembly, heterodimer of LeuC and LeuD. It depends on [4Fe-4S] cluster as a cofactor.

The catalysed reaction is (2R,3S)-3-isopropylmalate = (2S)-2-isopropylmalate. Its pathway is amino-acid biosynthesis; L-leucine biosynthesis; L-leucine from 3-methyl-2-oxobutanoate: step 2/4. In terms of biological role, catalyzes the isomerization between 2-isopropylmalate and 3-isopropylmalate, via the formation of 2-isopropylmaleate. This Pseudomonas entomophila (strain L48) protein is 3-isopropylmalate dehydratase large subunit.